The sequence spans 402 residues: Triose phosphate/phosphate translocator, chloroplastic (402 aa).

A chloroplast-targeting transit peptide spans 1-72 (MESRVLSRAT…KGASLLRPCP (72 aa)). Residues 73-96 (ATAGGNDSAGEEKVAPVGFFSRYP) lie on the Chloroplast intermembrane side of the membrane. Residues 97–117 (ALTTGFFFFTWYFLNVIFNIL) traverse the membrane as a helical segment. The Lumenal portion of the chain corresponds to 118–129 (NKKIYNYFPYPY). A helical transmembrane segment spans residues 130-150 (FVSVIHLAVGVVYCLVSWTVG). Residues 151–207 (LPKRAPIDGNLLKLLIPVAVCHALGHVTSNVSFAAVAVSFTHTVKALEPFFNAAASQ) lie on the Chloroplast intermembrane side of the membrane. The helical transmembrane segment at 208–228 (FILGQSIPITLWLSLAPVVIG) threads the bilayer. The Lumenal segment spans residues 229 to 272 (VSMASLTELSFNWLGFISAMISNISFTYRSIYSKKAMTDMDSTN). Residues 273–292 (IYAYISIIALIVCIPPALII) form a helical membrane-spanning segment. Topologically, residues 293–370 (EGPTLLKTGF…IIFGNKISTQ (78 aa)) are chloroplast intermembrane. The chain crosses the membrane as a helical span at residues 371 to 391 (TGIGTGIAIAGVALYSFIKAQ). Topologically, residues 392–402 (IEEEKRQAKAA) are lumenal.

It belongs to the TPT transporter family. TPT (TC 2.A.7.9) subfamily. In terms of assembly, homodimer.

The protein resides in the plastid. Its subcellular location is the chloroplast membrane. In terms of biological role, mediates the export of fixed carbons from the chloroplasts into the cytosol in the form of triose phosphates. This is Triose phosphate/phosphate translocator, chloroplastic from Pisum sativum (Garden pea).